The chain runs to 182 residues: Ribosome-recycling factor (182 aa).

Residues 136-158 (IKKQEKEGDLSEDQSRDEQDQVQ) are disordered.

Belongs to the RRF family.

Its subcellular location is the cytoplasm. Functionally, responsible for the release of ribosomes from messenger RNA at the termination of protein biosynthesis. May increase the efficiency of translation by recycling ribosomes from one round of translation to another. The protein is Ribosome-recycling factor of Synechococcus sp. (strain CC9311).